The primary structure comprises 135 residues: UPF0102 protein RPC_0320 (135 aa).

The protein belongs to the UPF0102 family.

The polypeptide is UPF0102 protein RPC_0320 (Rhodopseudomonas palustris (strain BisB18)).